Consider the following 53-residue polypeptide: ComX pheromone (53 aa).

Residues 1-46 (MQEMVGYLIKYPNVLREVMEGNACLLGVDKDQSECIINGFKGLEIY) constitute a propeptide that is removed on maturation. Trp-51 is lipidated: 3'-geranyl-2',N2-cyclotryptophan.

Interacts directly with the sensor histidine kinase ComP and stimulates its activity. Trp-51 is modified by geranylation, which is essential for activity. Modified by the tryptophan prenyltransferase ComQ before export to the extracellular environment. The type of isoprenyl derivative differs among the different pherotypes and depends on ComX primary sequence.

It localises to the secreted. Its function is as follows. Part of a major quorum-sensing system that regulates the development of genetic competence. Acts through the activation of the two-component regulatory system ComP/ComA composed of a sensor histidine kinase, ComP, and a response regulator, ComA. This Bacillus mojavensis protein is ComX pheromone.